The following is a 210-amino-acid chain: Thymidylate kinase (210 aa).

An ATP-binding site is contributed by 11–18 (GVDGAGKT).

The protein belongs to the thymidylate kinase family.

The catalysed reaction is dTMP + ATP = dTDP + ADP. Its function is as follows. Phosphorylation of dTMP to form dTDP in both de novo and salvage pathways of dTTP synthesis. The polypeptide is Thymidylate kinase (tmk) (Mycoplasma pneumoniae (strain ATCC 29342 / M129 / Subtype 1) (Mycoplasmoides pneumoniae)).